A 171-amino-acid polypeptide reads, in one-letter code: Serine acetyltransferase (171 aa).

It belongs to the transferase hexapeptide repeat family.

It is found in the cytoplasm. The enzyme catalyses L-serine + acetyl-CoA = O-acetyl-L-serine + CoA. Its pathway is amino-acid biosynthesis; L-cysteine biosynthesis; L-cysteine from L-serine: step 1/2. The sequence is that of Serine acetyltransferase (cysE) from Helicobacter pylori (strain ATCC 700392 / 26695) (Campylobacter pylori).